A 268-amino-acid chain; its full sequence is tRNA pseudouridine synthase A (268 aa).

Aspartate 63 serves as the catalytic Nucleophile. Tyrosine 122 is a binding site for substrate.

The protein belongs to the tRNA pseudouridine synthase TruA family. Homodimer.

It carries out the reaction uridine(38/39/40) in tRNA = pseudouridine(38/39/40) in tRNA. Its function is as follows. Formation of pseudouridine at positions 38, 39 and 40 in the anticodon stem and loop of transfer RNAs. In Treponema denticola (strain ATCC 35405 / DSM 14222 / CIP 103919 / JCM 8153 / KCTC 15104), this protein is tRNA pseudouridine synthase A.